The chain runs to 867 residues: MIYTDAGVDEDKATIRPNQTHQFQKVQDEAKEWTKNKFLEFLNNFKLKKKIDKNNNNNNNEDNEDNNENENEYDENGIKKEKIDKSYYRQQVERMIKNDKSSLYIDFLHLEKFDKGLGKALLMEYFRLEPAIRQGLSIFIQKYFPSFMERVNKERIVLSICCYNVSTFVHIRELRSSRIGSLCSISGTVTRTSEVRPELVIGSFICKDCNTSSLPIAQQFKYTEPTKCLNPLCSNQRRWKINLEESTFTDWQKVRVQENNSEIPGGSVPRSLEIILRGDSVETARAGDTCTFVGTMNVIPDVSKMSIGNNAQIIKGVASSTKEGSNANGKDDFGGVGGLKDLGVREMNYRVCFFSQSVRSNVSTLSSINRKESGDNHGGHSHSVGIIDEDLEPESKESFLDSLPKKEKDSLKKMIKSKKIYQNLVNSICPSIFGHEEIKRGVLLMLFGGVHKKTPEKIRLRGDINVCIVGDPSTSKSTFLKYLVSFLPRTVYTSGKASSAAGLTATVVKDQESGDFNIEAGALMLADNGICCIDEFDKMEPGDQVAIHEAMEQQTISIAKAGIHASLNARTSILAAANPIGGRYDRNKTLKQNLNIGGPLMSRFDLFFVVLDECNPESDHRIAEHIVLTHQKREKAFNAPFSATEIKNYIKYTKFICPTIPDESVQLLVGHYDRLRQMDTSGSKTPAYRITVRQLESLVRLSESLARLHLDTKVLPKYVNEAARLLEKSIVHVETNDVILGDDDDDLVKNVENDNDNHAEEDGDDGIGKLTMNFSKYSQLSKLLVLQIKQSGKEKSGIKQIDLIDWYIKDQLESGIITDDEVTKETKITKMVINKMINKDNSLVVLVPNQYPDHRILIIHPNYSFDK.

The tract at residues I51–N76 is disordered. Positions E61–E75 are enriched in acidic residues. The MCM domain occupies I420 to I626. Positions 473, 474, 476, 477, and 578 each coordinate ATP. Residues S602–D605 carry the Arginine finger motif. ADP contacts are provided by R693 and E696.

The protein belongs to the MCM family. Component of the MCM2-7 complex. The complex forms a toroidal hexameric ring with the proposed subunit order MCM2-MCM6-MCM4-MCM7-MCM3-MCM5 (By simililarity).

Its subcellular location is the nucleus. It catalyses the reaction ATP + H2O = ADP + phosphate + H(+). Its function is as follows. Acts as a component of the MCM2-7 complex (MCM complex) which is the replicative helicase essential for 'once per cell cycle' DNA replication initiation and elongation in eukaryotic cells. Core component of CDC45-MCM-GINS (CMG) helicase, the molecular machine that unwinds template DNA during replication, and around which the replisome is built. The active ATPase sites in the MCM2-7 ring are formed through the interaction surfaces of two neighboring subunits such that a critical structure of a conserved arginine finger motif is provided in trans relative to the ATP-binding site of the Walker A box of the adjacent subunit. The six ATPase active sites, however, are likely to contribute differentially to the complex helicase activity. This Dictyostelium discoideum (Social amoeba) protein is DNA replication licensing factor mcm6 (mcm6).